The following is a 64-amino-acid chain: Conotoxin Im11.4 (64 aa).

An N-terminal signal peptide occupies residues 1-26; sequence MMFRLTSVSCILLVIAFLNLVGLTNA. 4 disulfides stabilise this stretch: Cys27/Cys41, Cys34/Cys46, Cys40/Cys50, and Cys45/Cys54. His57 is subject to Histidine amide. Residues 61 to 64 constitute a propeptide that is removed on maturation; the sequence is ATFQ.

The protein belongs to the conotoxin I2 superfamily. As to expression, expressed by the venom duct.

Its subcellular location is the secreted. The polypeptide is Conotoxin Im11.4 (Conus imperialis (Imperial cone)).